The chain runs to 160 residues: Cytochrome b6-f complex subunit 4 (160 aa).

The next 3 membrane-spanning stretches (helical) occupy residues 36–56 (LLYI…GLAV), 95–115 (LLGV…PFLE), and 131–151 (TVFL…TLPI).

The protein belongs to the cytochrome b family. PetD subfamily. In terms of assembly, the 4 large subunits of the cytochrome b6-f complex are cytochrome b6, subunit IV (17 kDa polypeptide, petD), cytochrome f and the Rieske protein, while the 4 small subunits are petG, petL, petM and petN. The complex functions as a dimer.

It is found in the plastid. The protein localises to the chloroplast thylakoid membrane. In terms of biological role, component of the cytochrome b6-f complex, which mediates electron transfer between photosystem II (PSII) and photosystem I (PSI), cyclic electron flow around PSI, and state transitions. This Solanum tuberosum (Potato) protein is Cytochrome b6-f complex subunit 4.